Consider the following 407-residue polypeptide: Probable NADPH dehydrogenase (407 aa).

Residues Thr49 and Gln124 each contribute to the FMN site. Catalysis depends on Tyr206, which acts as the Proton donor. 2 residues coordinate FMN: Arg254 and Arg357.

The protein belongs to the NADH:flavin oxidoreductase/NADH oxidase family. The cofactor is FMN.

It carries out the reaction A + NADPH + H(+) = AH2 + NADP(+). Its function is as follows. Oxidoreductase that binds mammalian estrogens with high affinity. The protein is Probable NADPH dehydrogenase of Candida albicans (strain SC5314 / ATCC MYA-2876) (Yeast).